Consider the following 1384-residue polypeptide: Protein Gawky (1384 aa).

Disordered regions lie at residues 1 to 99, 148 to 227, 263 to 335, and 447 to 501; these read MREA…VWTG, NGSS…DPRG, TAST…DDGT, and VGAP…SGWS. The interval 1-205 is required for interaction with AGO1; the sequence is MREALFSQDG…HRGGNGSGAT (205 aa). Sufficient for miRNA-mediated silencing stretches follow at residues 1 to 605 and 605 to 830; these read MREA…SLGS and SYAD…SVHL. Residues 15 to 24 are compositionally biased toward polar residues; that stretch reads HVNQDTNWEV. The span at 150–171 shows a compositional bias: low complexity; it reads SSNITGSSGVATGSSGNSSNAG. Residues 205-490 form a minimal N-terminal region required for miRNA-mediated silencing region; that stretch reads TSSDPRDIRM…GVSWGNKQSK (286 aa). Residues 208–225 show a composition bias toward basic and acidic residues; it reads DPRDIRMIDPRDPIRGDP. 2 stretches are compositionally biased toward polar residues: residues 449–475 and 485–501; these read APSSGSVSSNNWVDDKSNSTLAQNSWS and GNKQSKPPSNSASSGWS. The UBA domain occupies 547–588; it reads IIKQSKQYRILVENGFKKEDVERALVIANMNIEEAADMLRAN. Disordered stretches follow at residues 607–626, 809–841, 889–942, 962–1022, 1052–1102, 1188–1221, and 1318–1368; these read ADHNSSTSSGGFAGRYPVNS, QNMQPTSQQQQPQQQQLPSVHLSNSGNDYLRGH, TEFS…NKDW, EPGK…LSSS, TSPL…GVQT, SENEVQSIMQHLPQTPSSTSSSGTSGGNVGGVGT, and GTAN…PSGR. A compositionally biased stretch (low complexity) spans 809–826; the sequence is QNMQPTSQQQQPQQQQLP. The tract at residues 862-1115 is not required for interaction with AGO1 or miRNAs or for localization to P-bodies but necessary for miRNA-mediated silencing and for interaction with pAbp; it reads YQGASNQQSR…NWTGGNTTWG (254 aa). Positions 898–924 are enriched in polar residues; that stretch reads TKQNLTANTSNINSLGLQNDSTWSTGR. Positions 940–1215 are sufficient for miRNA-mediated silencing; it reads KDWSVAQPTS…TSSSGTSGGN (276 aa). Over residues 1010-1022 the composition is skewed to low complexity; the sequence is SPTDLPPLSLSSS. The span at 1052–1061 shows a compositional bias: polar residues; the sequence is TSPLNKSSSR. The segment covering 1068 to 1084 has biased composition (low complexity); the sequence is TANSNKSANSNASTPTT. One can recognise an RRM domain in the interval 1117–1189; the sequence is SWLLLKNLTA…TTIFAESPSE (73 aa). Polar residues predominate over residues 1188–1203; it reads SENEVQSIMQHLPQTP. The not required for interaction with AGO1 or miRNAs or for localization to P-bodies but necessary for miRNA-mediated silencing, dissociation from AGO1 and miRNAs and interaction with pAbp stretch occupies residues 1200-1384; that stretch reads PQTPSSTSSS…ISLVYSIVDD (185 aa). Positions 1211 to 1220 are enriched in gly residues; that stretch reads TSGGNVGGVG. The span at 1318-1349 shows a compositional bias: low complexity; the sequence is GTANSSGSKSSANNLASGQSSASNLTNSTNST. A compositionally biased stretch (polar residues) spans 1350 to 1365; it reads WRQTSQNQALQSQSRP.

It belongs to the GW182 family. Component of the miRNA-directed RNA-induced silencing complex (miRISC), composed of at least AGO1 and gw, which bind mature miRNAs and targets the selective destruction of homologous RNAs. Interacts (via N-terminal region) with AGO1 (via Piwi domain); the interaction is essential for localization of AGO1 in P-bodies and for miRNA-mediated silencing. Interacts with pAbp/PABPC1; this interaction interferes with the binding of pAbp to eIF4G and is required for miRNA-mediated silencing. Interacts with CCR4-NOT complex members Not1, Rga/NOT2, twin/CCR4, Pop2 and NOT3/5 and with PAN complex members CG8232/PAN2 and CG11486/PAN3.

The protein localises to the cytoplasm. It is found in the P-body. In terms of biological role, required for gene silencing mediated by micro-RNAs (miRNAs). Silences both polyadenylated and deadenylated mRNAs. Required for miRNA-mediated translational repression and mRNA decay. Not required for miRNA target recognition. Necessary to initiate but not to maintain silencing. Promotes mRNA deadenylation through the recruitment of the CCR4-NOT and PAN complexes and promotes decapping by the DCP1-DCP2 complex. Dissociates from silenced mRNAs after deadenylation. Required for completion of nuclear divisions during early embryonic development. This Drosophila melanogaster (Fruit fly) protein is Protein Gawky.